Reading from the N-terminus, the 591-residue chain is L-fucose isomerase (591 aa).

Catalysis depends on proton acceptor residues Glu337 and Asp361. Residues Glu337, Asp361, and His528 each contribute to the Mn(2+) site.

The protein belongs to the L-fucose isomerase family. Homohexamer. Requires Mn(2+) as cofactor.

It localises to the cytoplasm. It catalyses the reaction L-fucose = L-fuculose. Its pathway is carbohydrate degradation; L-fucose degradation; L-lactaldehyde and glycerone phosphate from L-fucose: step 1/3. Functionally, converts the aldose L-fucose into the corresponding ketose L-fuculose. The chain is L-fucose isomerase from Salmonella paratyphi A (strain ATCC 9150 / SARB42).